The sequence spans 435 residues: Tol-Pal system protein TolB (435 aa).

Residues 1-20 (MRKIIAGVFIFVFLISNLYA) form the signal peptide.

Belongs to the TolB family. The Tol-Pal system is composed of five core proteins: the inner membrane proteins TolA, TolQ and TolR, the periplasmic protein TolB and the outer membrane protein Pal. They form a network linking the inner and outer membranes and the peptidoglycan layer.

Its subcellular location is the periplasm. In terms of biological role, part of the Tol-Pal system, which plays a role in outer membrane invagination during cell division and is important for maintaining outer membrane integrity. This chain is Tol-Pal system protein TolB, found in Francisella tularensis subsp. mediasiatica (strain FSC147).